A 445-amino-acid chain; its full sequence is Trigger factor (445 aa).

The PPIase FKBP-type domain occupies 172-257 (GDQVVINFVG…VKSVNWAHLP (86 aa)).

The protein belongs to the FKBP-type PPIase family. Tig subfamily.

The protein resides in the cytoplasm. It catalyses the reaction [protein]-peptidylproline (omega=180) = [protein]-peptidylproline (omega=0). In terms of biological role, involved in protein export. Acts as a chaperone by maintaining the newly synthesized protein in an open conformation. Functions as a peptidyl-prolyl cis-trans isomerase. The chain is Trigger factor from Polynucleobacter necessarius subsp. necessarius (strain STIR1).